Here is a 119-residue protein sequence, read N- to C-terminus: Large ribosomal subunit protein bL19 (119 aa).

Belongs to the bacterial ribosomal protein bL19 family.

Functionally, this protein is located at the 30S-50S ribosomal subunit interface and may play a role in the structure and function of the aminoacyl-tRNA binding site. In Mycoplasma pneumoniae (strain ATCC 29342 / M129 / Subtype 1) (Mycoplasmoides pneumoniae), this protein is Large ribosomal subunit protein bL19 (rplS).